A 1196-amino-acid polypeptide reads, in one-letter code: Calcium-activated potassium channel subunit alpha-1 (1196 aa).

The Extracellular segment spans residues 1 to 52 (MATWNASQIILNSMSNIIESPQSKPRPVMASNGASLFIPVTMEVPCDQGTRM). The helical transmembrane segment at 53 to 73 (WWAFLASSMVTFFGGLFIILV) threads the bilayer. Topologically, residues 74-146 (WRTFKYLWTV…MISAQTLTGR (73 aa)) are cytoplasmic. Residues 147–167 (VLVVTVFALSIGALMIYFIDS) traverse the membrane as a helical segment. At 168 to 182 (SNPIESCQNFYKDFT) the chain is on the extracellular side. A helical membrane pass occupies residues 183–203 (LQIDMAFNIFFLLYFGLRFIA). The Cytoplasmic portion of the chain corresponds to 204 to 207 (ANDK). Residues 208–228 (LWFWLEVNSVVDFFTVPPVFV) form a helical membrane-spanning segment. The Extracellular segment spans residues 229-232 (SVYL). The helical; Voltage-sensor transmembrane segment at 233 to 253 (NRSWLGLRFLRALRLIQFSEI) threads the bilayer. At 254–268 (LQFLNILKTSNSIKL) the chain is on the cytoplasmic side. Residues 269–289 (VNLCSIFISTWLTAAGFIHLV) form a helical membrane-spanning segment. The Extracellular portion of the chain corresponds to 290–303 (ENSGDPWRNFENSQ). Residues 304–326 (DLSYWECMYLLMVTMSTVGYGDV) constitute an intramembrane region (pore-forming). The Selectivity for potassium signature appears at 320 to 323 (TVGY). Topologically, residues 327 to 335 (YAKTTLGRL) are extracellular. The chain crosses the membrane as a helical span at residues 336 to 356 (FMVFFILGGLAMFASYVPEII). Over 357–1196 (ELIGNRKKYG…PPIREVEDEC (840 aa)) the chain is Cytoplasmic. The RCK N-terminal 1 domain occupies 375–517 (RKHIVVCGHI…WNWKDGDDAI (143 aa)). Residues Glu407, Gln430, and Glu432 each coordinate Mg(2+). Residues 524–544 (LGFIAQSCLAQGLSTMLANLF) are segment S7. The tract at residues 581–601 (LSFPAVCELCFVKLKLLMIAI) is segment S8. Positions 645–649 (CKACH) are heme-binding motif. Positions 672–697 (SALSPKKKQRNGGMRHSPNTSPNMMR) are disordered. Positions 748–768 (VLSGHVVVCIFGDMTSALIGV) are segment S9. The RCK N-terminal 2 domain maps to 750–894 (SGHVVVCIFG…MERSSPDNSP (145 aa)). The Calcium bowl signature appears at 914–936 (TELVNDSNVQFLDQDDDDDPDTE). Positions 923, 926, 929, and 931 each coordinate Ca(2+). A segment S10 region spans residues 943–963 (FACGTAFAVSVLDSLMSATYF). The segment covering 1098-1119 (ASLSHSSHSSHSSSKKSSSVTS) has biased composition (low complexity). Residues 1098-1149 (ASLSHSSHSSHSSSKKSSSVTSILHTASANRQNRVKARDSRDKQKMGQAEKK) form a disordered region. A compositionally biased stretch (polar residues) spans 1120 to 1129 (ILHTASANRQ). Residues 1133–1149 (KARDSRDKQKMGQAEKK) are compositionally biased toward basic and acidic residues.

This sequence belongs to the potassium channel family. Calcium-activated (TC 1.A.1.3) subfamily. KCa1.1/KCNMA1 sub-subfamily. In terms of assembly, homotetramer; which constitutes the calcium-activated potassium channel. Expressed in both the somites and neural tube of 1 day embryos. Within the nervous system, it is restricted to dorsal parts, and expressed centrally in regions dedicated to processing of sensory information. Six hours later, it is expressed segmentally within the somites. At this time, it is expressed in a primary sensory organ, the trigeminal ganglion. By 2 days, it is also expressed in other primary sensory organs, such as the otic vesicle, and the eye. Within the retina, it is expressed to an internal layer. In the developing otic vesicle, it is abundantly expressed near the apical surface. Isoform 3 is neural-specific, and is only expressed during late stages of neuronal differentiation.

It localises to the cell membrane. It carries out the reaction K(+)(in) = K(+)(out). Ethanol and carbon monoxide-bound heme increase channel activation. Heme inhibits channel activation. Its function is as follows. Potassium channel activated by both membrane depolarization or increase in cytosolic Ca(2+) that mediates export of K(+). It is also activated by the concentration of cytosolic Mg(2+). Its activation dampens the excitatory events that elevate the cytosolic Ca(2+) concentration and/or depolarize the cell membrane. It therefore contributes to repolarization of the membrane potential. Plays a key role in controlling excitability in a number of systems, such as regulation of the contraction of smooth muscle, the tuning of hair cells in the cochlea, regulation of transmitter release, and innate immunity. In smooth muscles, its activation by high level of Ca(2+), caused by ryanodine receptors in the sarcoplasmic reticulum, regulates the membrane potential. In cochlea cells, its number and kinetic properties partly determine the characteristic frequency of each hair cell and thereby helps to establish a tonotopic map. Highly sensitive to both iberiotoxin (IbTx) and charybdotoxin (CTX). The sequence is that of Calcium-activated potassium channel subunit alpha-1 (kcnma1) from Xenopus laevis (African clawed frog).